The sequence spans 351 residues: Peptide chain release factor 1 (351 aa).

Gln-229 bears the N5-methylglutamine mark.

It belongs to the prokaryotic/mitochondrial release factor family. Methylated by PrmC. Methylation increases the termination efficiency of RF1.

Its subcellular location is the cytoplasm. Peptide chain release factor 1 directs the termination of translation in response to the peptide chain termination codons UAG and UAA. This is Peptide chain release factor 1 from Ruegeria pomeroyi (strain ATCC 700808 / DSM 15171 / DSS-3) (Silicibacter pomeroyi).